A 434-amino-acid chain; its full sequence is 3-phosphoshikimate 1-carboxyvinyltransferase (434 aa).

Positions 22, 23, and 27 each coordinate 3-phosphoshikimate. Lys22 lines the phosphoenolpyruvate pocket. The phosphoenolpyruvate site is built by Gly93 and Arg121. 6 residues coordinate 3-phosphoshikimate: Ser168, Ser169, Gln170, Ser199, Asp320, and Lys347. Residue Gln170 participates in phosphoenolpyruvate binding. The active-site Proton acceptor is the Asp320. Residues Arg351, Arg394, and Lys419 each contribute to the phosphoenolpyruvate site.

This sequence belongs to the EPSP synthase family. In terms of assembly, monomer.

The protein localises to the cytoplasm. The enzyme catalyses 3-phosphoshikimate + phosphoenolpyruvate = 5-O-(1-carboxyvinyl)-3-phosphoshikimate + phosphate. It functions in the pathway metabolic intermediate biosynthesis; chorismate biosynthesis; chorismate from D-erythrose 4-phosphate and phosphoenolpyruvate: step 6/7. Its function is as follows. Catalyzes the transfer of the enolpyruvyl moiety of phosphoenolpyruvate (PEP) to the 5-hydroxyl of shikimate-3-phosphate (S3P) to produce enolpyruvyl shikimate-3-phosphate and inorganic phosphate. The protein is 3-phosphoshikimate 1-carboxyvinyltransferase of Paraburkholderia phytofirmans (strain DSM 17436 / LMG 22146 / PsJN) (Burkholderia phytofirmans).